The following is a 322-amino-acid chain: Solute carrier family 35 member B1 (322 aa).

8 helical membrane-spanning segments follow: residues Leu-12–Gln-32, Phe-51–Ile-71, Trp-85–Leu-105, Tyr-136–Tyr-156, Thr-168–Val-188, Leu-210–Leu-230, Ile-243–Tyr-263, and Val-285–Leu-305. A Di-lysine motif motif is present at residues Lys-318–His-322.

Belongs to the nucleotide-sugar transporter family. SLC35B subfamily.

Its subcellular location is the endoplasmic reticulum membrane. The enzyme catalyses ADP(in) + ATP(out) = ADP(out) + ATP(in). The catalysed reaction is UDP(out) + ATP(in) = UDP(in) + ATP(out). It catalyses the reaction UTP(out) + ATP(in) = UTP(in) + ATP(out). It carries out the reaction dATP(out) + ATP(in) = dATP(in) + ATP(out). In terms of biological role, ATP:ADP antiporter that catalyzes the exchange of ATP and ADP across the endoplasmic reticulum (ER) membrane. Imports ATP from the cytosol to the ER lumen and exports ADP in the opposite direction. Regulates ER energy metabolism and protein biogenesis. Appears to be part of a calcium-dependent ER to cytosol low energy response axis, where calcium efflux from ER to the cytosol triggers ATP import into the ER lumen to maintain sufficient ATP supply. Provides ATP to ER chaperone HSPA5 that drives protein folding and trafficking in the ER. Can transport dATP, UTP or UDP in exchange for ATP, but the physiological relevance of this process remains to be established. The polypeptide is Solute carrier family 35 member B1 (Slc35b1) (Rattus norvegicus (Rat)).